We begin with the raw amino-acid sequence, 229 residues long: MAQKKQLYVFSDFDGTITLQDSNDYLTDNFGMGNANRVNLNQQVLDGSISFRDAFAKMLDSVHLSYDEALEVLKKNVAIDPSFKPFYEWCKSQDIRVIILSSGMEPFIRALFEQYLGKEEASSIEIVSNDINVHPDGQWNIVYHDDSHFGHDKSLTIRPYAQLPESKRPHMVYCGDGVSDLSAAKETEHLFAKKGRDLIKYCEREKISFSEFETFADIHKDLQKLFFSS.

The active-site Nucleophile is the Asp-12. Asp-12, Asp-14, and Asp-176 together coordinate Mg(2+). Catalysis depends on Asp-14, which acts as the Proton donor.

It belongs to the HAD-like hydrolase superfamily. As to quaternary structure, component of the mst2 complex composed of at least eaf6, mst2, nto1, pdp3, ptf1, ptf2 and tfg3. It depends on Mg(2+) as a cofactor.

It localises to the cytoplasm. The protein localises to the nucleus. The enzyme catalyses D-ribitol 5-phosphate + H2O = ribitol + phosphate. It carries out the reaction D-sorbitol 6-phosphate + H2O = D-sorbitol + phosphate. It catalyses the reaction sn-glycerol 1-phosphate + H2O = glycerol + phosphate. The catalysed reaction is D-erythrose 4-phosphate + H2O = D-erythrose + phosphate. Component of the mst2 complex which is a highly specific H3 lysine 14 (H3K14) acetyltransferase that functions together with gcn5 to regulate global levels of H3K14 acetylation (H3K14ac), critical for DNA damage checkpoint activation. In terms of biological role, may also function as a sugar alcohol (polyol) phosphatase that prevents accumulation of toxic levels of polyol phosphates, which can impair glycolysis by inhibiting glucose-6-phosphate isomerase. The protein is Pdp3-interacting factor 1 of Schizosaccharomyces pombe (strain 972 / ATCC 24843) (Fission yeast).